Consider the following 214-residue polypeptide: 3-demethoxyubiquinol 3-hydroxylase (214 aa).

E63, E93, H96, E145, E177, and H180 together coordinate Fe cation.

The protein belongs to the COQ7 family. Fe cation is required as a cofactor.

It is found in the cell membrane. It catalyses the reaction a 5-methoxy-2-methyl-3-(all-trans-polyprenyl)benzene-1,4-diol + AH2 + O2 = a 3-demethylubiquinol + A + H2O. It participates in cofactor biosynthesis; ubiquinone biosynthesis. In terms of biological role, catalyzes the hydroxylation of 2-nonaprenyl-3-methyl-6-methoxy-1,4-benzoquinol during ubiquinone biosynthesis. The chain is 3-demethoxyubiquinol 3-hydroxylase from Psychrobacter cryohalolentis (strain ATCC BAA-1226 / DSM 17306 / VKM B-2378 / K5).